We begin with the raw amino-acid sequence, 61 residues long: Small ribosomal subunit protein uS14 (61 aa).

4 residues coordinate Zn(2+): C24, C27, C40, and C43.

It belongs to the universal ribosomal protein uS14 family. Zinc-binding uS14 subfamily. In terms of assembly, part of the 30S ribosomal subunit. Contacts proteins S3 and S10. Zn(2+) serves as cofactor.

In terms of biological role, binds 16S rRNA, required for the assembly of 30S particles and may also be responsible for determining the conformation of the 16S rRNA at the A site. The polypeptide is Small ribosomal subunit protein uS14 (Symbiobacterium thermophilum (strain DSM 24528 / JCM 14929 / IAM 14863 / T)).